We begin with the raw amino-acid sequence, 347 residues long: Hydroxymethylglutaryl-CoA synthase (347 aa).

(3S)-3-hydroxy-3-methylglutaryl-CoA-binding residues include aspartate 29 and alanine 30. Glutamate 80 functions as the Proton donor/acceptor in the catalytic mechanism. The (3S)-3-hydroxy-3-methylglutaryl-CoA site is built by cysteine 112 and threonine 153. The active-site Acyl-thioester intermediate is the cysteine 112. Arginine 199 is a binding site for CoA. Positions 201 and 234 each coordinate (3S)-3-hydroxy-3-methylglutaryl-CoA. The active-site Proton donor/acceptor is the histidine 234. Lysine 239 provides a ligand contact to CoA. Positions 243, 266, and 296 each coordinate (3S)-3-hydroxy-3-methylglutaryl-CoA.

This sequence belongs to the thiolase-like superfamily. Archaeal HMG-CoA synthase family. Interacts with acetoacetyl-CoA thiolase that catalyzes the precedent step in the pathway and with a DUF35 protein. The acetoacetyl-CoA thiolase/HMG-CoA synthase complex channels the intermediate via a fused CoA-binding site, which allows for efficient coupling of the endergonic thiolase reaction with the exergonic HMGCS reaction.

The enzyme catalyses acetoacetyl-CoA + acetyl-CoA + H2O = (3S)-3-hydroxy-3-methylglutaryl-CoA + CoA + H(+). Its pathway is metabolic intermediate biosynthesis; (R)-mevalonate biosynthesis; (R)-mevalonate from acetyl-CoA: step 2/3. Catalyzes the condensation of acetyl-CoA with acetoacetyl-CoA to form 3-hydroxy-3-methylglutaryl-CoA (HMG-CoA). Functions in the mevalonate (MVA) pathway leading to isopentenyl diphosphate (IPP), a key precursor for the biosynthesis of isoprenoid compounds that are building blocks of archaeal membrane lipids. The polypeptide is Hydroxymethylglutaryl-CoA synthase (Methanocella arvoryzae (strain DSM 22066 / NBRC 105507 / MRE50)).